Reading from the N-terminus, the 2009-residue chain is Sodium channel protein type 1 subunit alpha (2009 aa).

Topologically, residues Met1–Ser128 are cytoplasmic. The segment covering Arg28–Gly48 has biased composition (basic and acidic residues). Positions Arg28–Asn60 are disordered. Residues Ile110 to Gln454 form an I repeat. A helical transmembrane segment spans residues Leu129 to Thr146. Over Met147 to Asp152 the chain is Extracellular. A helical membrane pass occupies residues Trp153–Gly177. Over Phe178–Asp188 the chain is Cytoplasmic. Residues Pro189–Glu205 traverse the membrane as a helical segment. At Phe206–Ser213 the chain is on the extracellular side. A helical membrane pass occupies residues Ala214–Thr235. Over Ile236–Lys245 the chain is Cytoplasmic. A helical transmembrane segment spans residues Lys246–Phe269. Over Met270–Ser369 the chain is Extracellular. Cystine bridges form between Cys277/Cys345 and Cys336/Cys351. Asn295, Asn301, Asn306, and Asn338 each carry an N-linked (GlcNAc...) asparagine glycan. The pore-forming intramembrane region spans Trp370–Trp384. Residues Glu385–Lys397 are Extracellular-facing. A helical transmembrane segment spans residues Thr398–Ala423. Residues Met424 to Pro768 are Cytoplasmic-facing. The interval Gln455–Ser528 is disordered. The segment covering Glu456–Ala466 has biased composition (low complexity). Ser470 carries the post-translational modification Phosphoserine. Over residues Leu479–Lys492 the composition is skewed to low complexity. The segment covering Lys495–Gln506 has biased composition (basic residues). The segment covering Lys507 to Ser528 has biased composition (basic and acidic residues). A phosphoserine mark is found at Ser523, Ser525, Ser550, Ser551, Ser607, and Ser730. The tract at residues Val584 to Arg627 is disordered. A compositionally biased stretch (basic and acidic residues) spans Asp593–Ser607. The II repeat unit spans residues Cys750–Gly1022. Residues Phe769–Met787 traverse the membrane as a helical segment. Topologically, residues Glu788–Asn797 are extracellular. Residues His798 to Ile820 form a helical membrane-spanning segment. The Cytoplasmic segment spans residues Ala821–Glu830. The helical transmembrane segment at Gly831–Leu849 threads the bilayer. Topologically, residues Ala850–Gly854 are extracellular. A helical transmembrane segment spans residues Leu855 to Pro874. The Cytoplasmic segment spans residues Thr875–Gly891. Residues Asn892–Phe912 traverse the membrane as a helical segment. Over Gly913–Phe938 the chain is Extracellular. Cys921 and Cys927 are joined by a disulfide. An intramembrane region (pore-forming) is located at residues His939–Trp952. Topologically, residues Ile953–Gln965 are extracellular. Cys959 and Cys968 form a disulfide bridge. The chain crosses the membrane as a helical span at residues Ala966 to Leu992. Topologically, residues Ser993–Asn1218 are cytoplasmic. The disordered stretch occupies residues Thr1129–Ala1163. The III repeat unit spans residues Arg1200 to Leu1514. The chain crosses the membrane as a helical span at residues Trp1219 to Phe1237. Residues Glu1238–Thr1250 are Extracellular-facing. A helical membrane pass occupies residues Met1251–Tyr1276. Over Gln1277–Thr1278 the chain is Cytoplasmic. Residues Tyr1279–Leu1304 form a helical membrane-spanning segment. Residues Gly1305–Lys1313 are Extracellular-facing. The chain crosses the membrane as a helical span at residues Ser1314–Gly1332. Over Met1333 to Pro1345 the chain is Cytoplasmic. A helical transmembrane segment spans residues Ser1346 to Phe1369. The Extracellular segment spans residues Ala1370 to Phe1415. Cys1376 and Cys1396 form a disulfide bridge. The pore-forming intramembrane region spans Asp1416–Gly1433. Residues Trp1434–Leu1457 lie on the Extracellular side of the membrane. Residues Tyr1458–Ile1483 form a helical membrane-spanning segment. Over Asp1484–Gln1541 the chain is Cytoplasmic. Ser1516 carries the phosphoserine; by PKC modification. Residues Ile1523 to Gln1821 form an IV repeat. The chain crosses the membrane as a helical span at residues Val1542–Val1560. Residues Glu1561–Ser1571 are Extracellular-facing. Residues Glu1561 to Ser1571 are S1-S2 loop of repeat IV. Residues Ile1572–Ile1593 traverse the membrane as a helical segment. The Cytoplasmic portion of the chain corresponds to Ser1594–Thr1601. A helical transmembrane segment spans residues Ile1602–Glu1623. The interval Met1619 to Arg1636 is S3b-S4 loop of repeat IV. Residues Leu1624–Arg1636 are Extracellular-facing. A helical membrane pass occupies residues Val1637 to Gly1655. At Ile1656–Met1665 the chain is on the cytoplasmic side. The helical transmembrane segment at Ser1666–Gly1688 threads the bilayer. Topologically, residues Met1689 to Gly1711 are extracellular. The pore-forming intramembrane region spans Asn1712–Trp1726. At Asp1727–Pro1759 the chain is on the extracellular side. An intrachain disulfide couples Cys1741 to Cys1756. Residues Ser1760–Asn1788 form a helical membrane-spanning segment. Residues Phe1789–Lys2009 lie on the Cytoplasmic side of the membrane. The IQ domain maps to Glu1915 to Lys1944. The segment at Pro1984–Lys2009 is disordered. The span at Arg1988–Lys2009 shows a compositional bias: basic and acidic residues.

It belongs to the sodium channel (TC 1.A.1.10) family. Nav1.1/SCN1A subfamily. The Nav1.1 voltage-gated sodium channel consists of an ion-conducting alpha subunit SCN1A which is functional on its own regulated by one or more beta-1 (SCN1B), beta-2 (SCN2B), beta-3 (SCN3B) and beta-4 (SCN4B) subunits. SCN1B and SCN3B are non-covalently associated with SCN1A. SCN2B and SCN4B are disulfide-linked to SCN1A. SCN1B regulates both the expression at the plasma membrane and the voltage dependence of Nav1.1 inactivation. SCN3B and SCN4B reduce Nav1.1 conductance. Probably interacts with TMEM233; modulates the gating properties of NaV1.1. Interacts with FGF13; regulates the steady-state inactivation of Nav.1.1. Phosphorylation at Ser-1516 by PKC in a highly conserved cytoplasmic loop slows inactivation of the sodium channel and reduces peak sodium currents. As to expression, present in cerebellar Purkinje neurons (at protein level). Expressed by myelinated, non-C-fiber neurons in sensory ganglia.

The protein localises to the cell membrane. The catalysed reaction is Na(+)(in) = Na(+)(out). With respect to regulation, activated by the spider toxins Hm1a and Hm1b (H.maculata, AC P60992 and AC P0DOC5) eliciting acute pain and mechanical allodynia. Functionally, pore-forming subunit of Nav1.1, a voltage-gated sodium (Nav) channel that directly mediates the depolarizing phase of action potentials in excitable membranes. Navs, also called VGSCs (voltage-gated sodium channels) or VDSCs (voltage-dependent sodium channels), operate by switching between closed and open conformations depending on the voltage difference across the membrane. In the open conformation they allow Na(+) ions to selectively pass through the pore, along their electrochemical gradient. The influx of Na(+) ions provokes membrane depolarization, initiating the propagation of electrical signals throughout cells and tissues. By regulating the excitability of neurons, ensures that they respond appropriately to synaptic inputs, maintaining the balance between excitation and inhibition in brain neural circuits. Nav1.1 plays a role in controlling the excitability and action potential propagation from somatosensory neurons, thereby contributing to the sensory perception of mechanically-induced pain. This is Sodium channel protein type 1 subunit alpha from Mus musculus (Mouse).